Here is a 172-residue protein sequence, read N- to C-terminus: 3-phenylpropionate/cinnamic acid dioxygenase subunit beta (172 aa).

Belongs to the bacterial ring-hydroxylating dioxygenase beta subunit family. This dioxygenase system consists of four proteins: the two subunits of the hydroxylase component (HcaE and HcaF), a ferredoxin (HcaC) and a ferredoxin reductase (HcaD).

The enzyme catalyses 3-phenylpropanoate + NADH + O2 + H(+) = 3-(cis-5,6-dihydroxycyclohexa-1,3-dien-1-yl)propanoate + NAD(+). It carries out the reaction (E)-cinnamate + NADH + O2 + H(+) = (2E)-3-(cis-5,6-dihydroxycyclohexa-1,3-dien-1-yl)prop-2-enoate + NAD(+). It functions in the pathway aromatic compound metabolism; 3-phenylpropanoate degradation. Part of the multicomponent 3-phenylpropionate dioxygenase. Converts 3-phenylpropionic acid (PP) and cinnamic acid (CI) into 3-phenylpropionate-dihydrodiol (PP-dihydrodiol) and cinnamic acid-dihydrodiol (CI-dihydrodiol), respectively. In Escherichia coli O139:H28 (strain E24377A / ETEC), this protein is 3-phenylpropionate/cinnamic acid dioxygenase subunit beta.